A 995-amino-acid chain; its full sequence is Integrator complex subunit 8 (995 aa).

Threonine 18 carries the phosphothreonine modification. The WFEF motif motif lies at 24–29 (WFEFLL). TPR repeat units lie at residues 250–288 (CQVC…IAEI), 320–356 (SQQL…SLPV), 570–603 (VYIL…VTEF), and 833–866 (HSWL…CSDF).

The protein belongs to the Integrator subunit 8 family. In terms of assembly, component of the Integrator complex, composed of core subunits INTS1, INTS2, INTS3, INTS4, INTS5, INTS6, INTS7, INTS8, INTS9/RC74, INTS10, INTS11/CPSF3L, INTS12, INTS13, INTS14 and INTS15. The core complex associates with protein phosphatase 2A subunits PPP2CA and PPP2R1A, to form the Integrator-PP2A (INTAC) complex.

Its subcellular location is the nucleus. It is found in the chromosome. In terms of biological role, component of the integrator complex, a multiprotein complex that terminates RNA polymerase II (Pol II) transcription in the promoter-proximal region of genes. The integrator complex provides a quality checkpoint during transcription elongation by driving premature transcription termination of transcripts that are unfavorably configured for transcriptional elongation: the complex terminates transcription by (1) catalyzing dephosphorylation of the C-terminal domain (CTD) of Pol II subunit POLR2A/RPB1 and SUPT5H/SPT5, (2) degrading the exiting nascent RNA transcript via endonuclease activity and (3) promoting the release of Pol II from bound DNA. The integrator complex is also involved in terminating the synthesis of non-coding Pol II transcripts, such as enhancer RNAs (eRNAs), small nuclear RNAs (snRNAs), telomerase RNAs and long non-coding RNAs (lncRNAs). Within the integrator complex, INTS8 is required for the recruitment of protein phosphatase 2A (PP2A) to transcription pause-release checkpoint. This is Integrator complex subunit 8 from Homo sapiens (Human).